A 276-amino-acid chain; its full sequence is MSASLPAYSQPRNAGALGVICTRSFPAVVGTADMMLKSADVTLIGYEKTGSGFCTAIIRGGYADIKLALEAGVATARQFEQYVSSTILPRPQGNLEAVLPISRRLSQEAMATRSHQNVGAIGLIETNGFPALVGAADAMLKSANVKLICYEKTGSGLCTAIVQGTVSNVTVAVEAGMYAAERIGQLNAIMVIPRPLDDLMDSLPEPQSDSEAAQPLQLPLRVREKQPLLELPELERQPIAIEAPRLLAEERQSALELAQETPLAEPLELPNPRDDQ.

2 consecutive BMC domains span residues 16 to 100 (ALGV…AVLP) and 120 to 204 (AIGL…DSLP). Disordered regions lie at residues 200–219 (MDSL…LQLP) and 252–276 (QSAL…RDDQ).

The protein belongs to the bacterial microcompartments protein family. As to quaternary structure, homooligomerizes, possibly as a trimer, interacts with CcmK2 in the carboxysome.

It localises to the carboxysome. Its function is as follows. Required for formation of the carboxysome, a polyhedral inclusion where RuBisCO (ribulose bisphosphate carboxylase, rbcL-rbcS) is sequestered. Required for recruitment of major shell protein CcmK2 to the pre-carboxysome. Suggested to be a carboxysome shell protein, but it is not detected in gels, mass spectrometry or by protein sequencing. In terms of biological role, beta-carboxysome assembly initiates when soluble RuBisCO is condensed into a liquid matrix in a pre-carboxysome by the RbcS-like domains of probably both CcmM58 and CcmM35. CcmN interacts with the N-terminus of CcmM58, and then recruits the CcmK2 major shell protein via CcmN's encapsulation peptide. Shell formation requires CcmK proteins and CcmO. CcmL caps the otherwise elongated carboxysome. Once fully encapsulated carboxysomes are formed, they migrate within the cell probably via interactions with the cytoskeleton. This chain is Carboxysome assembly protein CcmO, found in Synechococcus elongatus (strain ATCC 33912 / PCC 7942 / FACHB-805) (Anacystis nidulans R2).